The primary structure comprises 272 residues: SPbeta prophage-derived aminoglycoside N(3')-acetyltransferase-like protein YokD (272 aa).

CoA-binding positions include 38 to 44 (LSSIGWV) and glutamine 113.

Belongs to the antibiotic N-acetyltransferase family. Homodimer.

In terms of biological role, may contribute to antibiotic resistance. The chain is SPbeta prophage-derived aminoglycoside N(3')-acetyltransferase-like protein YokD (yokD) from Bacillus subtilis (strain 168).